The sequence spans 243 residues: Adenosylcobinamide-GDP ribazoletransferase (243 aa).

Helical transmembrane passes span 31 to 51, 57 to 77, 109 to 129, 135 to 155, and 188 to 208; these read LLFY…FSAL, LMLH…GLHL, IAVV…LALI, IGLL…FLGT, and VLLA…CFFW.

This sequence belongs to the CobS family. Mg(2+) is required as a cofactor.

Its subcellular location is the cell inner membrane. It catalyses the reaction alpha-ribazole + adenosylcob(III)inamide-GDP = adenosylcob(III)alamin + GMP + H(+). The catalysed reaction is alpha-ribazole 5'-phosphate + adenosylcob(III)inamide-GDP = adenosylcob(III)alamin 5'-phosphate + GMP + H(+). The protein operates within cofactor biosynthesis; adenosylcobalamin biosynthesis; adenosylcobalamin from cob(II)yrinate a,c-diamide: step 7/7. Functionally, joins adenosylcobinamide-GDP and alpha-ribazole to generate adenosylcobalamin (Ado-cobalamin). Also synthesizes adenosylcobalamin 5'-phosphate from adenosylcobinamide-GDP and alpha-ribazole 5'-phosphate. The chain is Adenosylcobinamide-GDP ribazoletransferase from Pseudomonas savastanoi pv. phaseolicola (strain 1448A / Race 6) (Pseudomonas syringae pv. phaseolicola (strain 1448A / Race 6)).